A 65-amino-acid chain; its full sequence is RKCLIKYSQANESSKTCPSGQLLCLKKWEIGNPSGKEVKRGCVATCPKPWKNEIIQCCAKDKCNA.

4 cysteine pairs are disulfide-bonded: Cys-3–Cys-24, Cys-17–Cys-42, Cys-46–Cys-57, and Cys-58–Cys-63.

Belongs to the three-finger toxin family. Short-chain subfamily. Orphan group III sub-subfamily. In terms of tissue distribution, expressed by the venom gland.

It localises to the secreted. This Bungarus candidus (Malayan krait) protein is Bucain.